Reading from the N-terminus, the 248-residue chain is Pulmonary surfactant-associated protein A (248 aa).

The N-terminal stretch at 1 to 20 (MLLCSLTLTLLWMVASGLEC) is a signal peptide. In terms of domain architecture, Collagen-like spans 28–100 (GSPGIPGTPG…PGERGPPGFP (73 aa)). The disordered stretch occupies residues 29-102 (SPGIPGTPGS…ERGPPGFPAY (74 aa)). Proline 30, proline 33, proline 36, proline 42, proline 54, proline 57, proline 63, proline 67, and proline 70 each carry 4-hydroxyproline. The span at 42–51 (PGRDGRDGIK) shows a compositional bias: basic and acidic residues. Residues 54–65 (PGPPGPMGPPGG) show a composition bias toward pro residues. Residues 69–82 (LPGRDGMTGAPGLP) are compositionally biased toward low complexity. The span at 84–93 (ERGEKGEPGE) shows a compositional bias: basic and acidic residues. Positions 132–248 (LAVGEKVFST…LQYRLAICEF (117 aa)) constitute a C-type lectin domain. 2 disulfides stabilise this stretch: cysteine 155–cysteine 246 and cysteine 224–cysteine 238. Asparagine 207 carries N-linked (GlcNAc...) asparagine glycosylation. Positions 215, 217, 234, and 235 each coordinate Ca(2+).

This sequence belongs to the SFTPA family. Oligomeric complex of 6 set of homotrimers.

The protein localises to the secreted. The protein resides in the extracellular space. It localises to the extracellular matrix. It is found in the surface film. In presence of calcium ions, it binds to surfactant phospholipids and contributes to lower the surface tension at the air-liquid interface in the alveoli of the mammalian lung and is essential for normal respiration. Enhances the expression of MYO18A/SP-R210 on alveolar macrophages. The chain is Pulmonary surfactant-associated protein A (SFTPA1) from Bos taurus (Bovine).